The following is a 135-amino-acid chain: D-ribose pyranase (135 aa).

H20 serves as the catalytic Proton donor. Residues D28, H102, and 124-126 (YSN) contribute to the substrate site.

This sequence belongs to the RbsD / FucU family. RbsD subfamily. In terms of assembly, homodecamer.

The protein resides in the cytoplasm. The catalysed reaction is beta-D-ribopyranose = beta-D-ribofuranose. The protein operates within carbohydrate metabolism; D-ribose degradation; D-ribose 5-phosphate from beta-D-ribopyranose: step 1/2. In terms of biological role, catalyzes the interconversion of beta-pyran and beta-furan forms of D-ribose. This Thermotoga petrophila (strain ATCC BAA-488 / DSM 13995 / JCM 10881 / RKU-1) protein is D-ribose pyranase.